Here is a 371-residue protein sequence, read N- to C-terminus: MPANLTEGSFHANQTVPMLDSSPVACTEIVTFTEALVAEEWGSFYSSFKTEQLITLWVLFVVTIVGNSVVLFSTCRRKRKSRMTFFVTQLAITDSFTGLINILTDIIWRFTGDFMAPDLVCRVVRYLQVVLLYASTYVLVSLSIDRYHAIVYPMKFLQGEKQAKVLIGIAWSLSFLFSIPTLIIFGKRTLSNGEVQCWALWPDDSYWTPYMTIVAFLVYFIPLAIISVIYGLVIRTIWMKSKTHETVISNCSDGKLCCSYNRGLISKAKIKAIKYSIVIILAFICCWSPYFLFDILDNFNVLPDTKERFYASVIIQNLPALNSAINPLIYCIFSSSICSPCKMQRSQDSRMTYRERSERHEMQILSKPEFI.

Residues 1 to 52 (MPANLTEGSFHANQTVPMLDSSPVACTEIVTFTEALVAEEWGSFYSSFKTEQ) lie on the Extracellular side of the membrane. 2 N-linked (GlcNAc...) asparagine glycosylation sites follow: asparagine 4 and asparagine 13. The helical transmembrane segment at 53-73 (LITLWVLFVVTIVGNSVVLFS) threads the bilayer. Over 74 to 82 (TCRRKRKSR) the chain is Cytoplasmic. The helical transmembrane segment at 83 to 103 (MTFFVTQLAITDSFTGLINIL) threads the bilayer. Residues 104–123 (TDIIWRFTGDFMAPDLVCRV) lie on the Extracellular side of the membrane. Cysteine 121 and cysteine 197 are joined by a disulfide. A helical membrane pass occupies residues 124 to 144 (VRYLQVVLLYASTYVLVSLSI). Residues 145–164 (DRYHAIVYPMKFLQGEKQAK) lie on the Cytoplasmic side of the membrane. The helical transmembrane segment at 165 to 185 (VLIGIAWSLSFLFSIPTLIIF) threads the bilayer. The Extracellular segment spans residues 186 to 212 (GKRTLSNGEVQCWALWPDDSYWTPYMT). A helical membrane pass occupies residues 213–233 (IVAFLVYFIPLAIISVIYGLV). At 234-275 (IRTIWMKSKTHETVISNCSDGKLCCSYNRGLISKAKIKAIKY) the chain is on the cytoplasmic side. Residues 276 to 296 (SIVIILAFICCWSPYFLFDIL) traverse the membrane as a helical segment. Over 297-312 (DNFNVLPDTKERFYAS) the chain is Extracellular. Residues 313–333 (VIIQNLPALNSAINPLIYCIF) traverse the membrane as a helical segment. Over 334–371 (SSSICSPCKMQRSQDSRMTYRERSERHEMQILSKPEFI) the chain is Cytoplasmic.

This sequence belongs to the G-protein coupled receptor 1 family. Vasopressin/oxytocin receptor subfamily.

It localises to the cell membrane. Its function is as follows. G-protein coupled receptor for neuropeptide S (NPS). Promotes mobilization of intracellular Ca(2+) stores. Inhibits cell growth in response to NPS binding. Involved in pathogenesis of asthma and other IgE-mediated diseases. In Mus musculus (Mouse), this protein is Neuropeptide S receptor (Npsr1).